A 508-amino-acid polypeptide reads, in one-letter code: Lysine--tRNA ligase (508 aa).

Residues E418 and E425 each coordinate Mg(2+).

It belongs to the class-II aminoacyl-tRNA synthetase family. As to quaternary structure, homodimer. Mg(2+) is required as a cofactor.

It is found in the cytoplasm. It catalyses the reaction tRNA(Lys) + L-lysine + ATP = L-lysyl-tRNA(Lys) + AMP + diphosphate. The protein is Lysine--tRNA ligase of Burkholderia mallei (strain NCTC 10247).